Consider the following 276-residue polypeptide: NADPH-dependent 7-cyano-7-deazaguanine reductase (276 aa).

80 to 82 (IES) provides a ligand contact to substrate. 82–83 (SK) lines the NADPH pocket. Cysteine 178 serves as the catalytic Thioimide intermediate. Aspartate 185 serves as the catalytic Proton donor. 217–218 (HE) contacts substrate. 246-247 (RG) contributes to the NADPH binding site.

Belongs to the GTP cyclohydrolase I family. QueF type 2 subfamily. Homodimer.

The protein resides in the cytoplasm. The enzyme catalyses 7-aminomethyl-7-carbaguanine + 2 NADP(+) = 7-cyano-7-deazaguanine + 2 NADPH + 3 H(+). Its pathway is tRNA modification; tRNA-queuosine biosynthesis. Functionally, catalyzes the NADPH-dependent reduction of 7-cyano-7-deazaguanine (preQ0) to 7-aminomethyl-7-deazaguanine (preQ1). This is NADPH-dependent 7-cyano-7-deazaguanine reductase from Teredinibacter turnerae (strain ATCC 39867 / T7901).